The chain runs to 448 residues: Na(+)-translocating NADH-quinone reductase subunit A (448 aa).

It belongs to the NqrA family. In terms of assembly, composed of six subunits; NqrA, NqrB, NqrC, NqrD, NqrE and NqrF.

The catalysed reaction is a ubiquinone + n Na(+)(in) + NADH + H(+) = a ubiquinol + n Na(+)(out) + NAD(+). Functionally, NQR complex catalyzes the reduction of ubiquinone-1 to ubiquinol by two successive reactions, coupled with the transport of Na(+) ions from the cytoplasm to the periplasm. NqrA to NqrE are probably involved in the second step, the conversion of ubisemiquinone to ubiquinol. In Alcanivorax borkumensis (strain ATCC 700651 / DSM 11573 / NCIMB 13689 / SK2), this protein is Na(+)-translocating NADH-quinone reductase subunit A.